A 210-amino-acid chain; its full sequence is Superoxide dismutase [Mn], mitochondrial (210 aa).

Residues His-29, His-77, Asp-164, and His-168 each coordinate Mn(2+).

Belongs to the iron/manganese superoxide dismutase family. In terms of assembly, homotetramer. Mn(2+) serves as cofactor.

It localises to the mitochondrion matrix. It carries out the reaction 2 superoxide + 2 H(+) = H2O2 + O2. Functionally, destroys superoxide anion radicals which are normally produced within the cells and which are toxic to biological systems. In Aspergillus niger, this protein is Superoxide dismutase [Mn], mitochondrial (sodB).